The primary structure comprises 343 residues: Small ribosomal subunit biogenesis GTPase RsgA (343 aa).

A CP-type G domain is found at 116–275 (RGQLKPVAAN…LIDSPGIREF (160 aa)). Residues 163–166 (NKAD) and 217–225 (GQSGVGKSS) each bind GTP. Zn(2+) contacts are provided by cysteine 299, cysteine 304, histidine 306, and cysteine 312.

The protein belongs to the TRAFAC class YlqF/YawG GTPase family. RsgA subfamily. As to quaternary structure, monomer. Associates with 30S ribosomal subunit, binds 16S rRNA. Zn(2+) is required as a cofactor.

The protein resides in the cytoplasm. Functionally, one of several proteins that assist in the late maturation steps of the functional core of the 30S ribosomal subunit. Helps release RbfA from mature subunits. May play a role in the assembly of ribosomal proteins into the subunit. Circularly permuted GTPase that catalyzes slow GTP hydrolysis, GTPase activity is stimulated by the 30S ribosomal subunit. In Pseudomonas fluorescens (strain ATCC BAA-477 / NRRL B-23932 / Pf-5), this protein is Small ribosomal subunit biogenesis GTPase RsgA.